A 416-amino-acid polypeptide reads, in one-letter code: Nucleoside transporter 1 (416 aa).

Residues 1–26 (MSISKESSKTMIDIEKKGGEGKDGKG) show a composition bias toward basic and acidic residues. Positions 1-28 (MSISKESSKTMIDIEKKGGEGKDGKGGS) are disordered. Over 1 to 35 (MSISKESSKTMIDIEKKGGEGKDGKGGSKMTKNEQ) the chain is Cytoplasmic. Residues 36 to 58 (FLLPFTFILIGLSSLNVWNTALG) form a helical membrane-spanning segment. Residues 59–64 (LNINFK) are Extracellular-facing. Residues 65–83 (YNTFQITGLVCSSIIALFV) traverse the membrane as a helical segment. The Cytoplasmic segment spans residues 84-87 (KVPK). The chain crosses the membrane as a helical span at residues 88 to 107 (MLLPFALGGLAMLCAGFQIA). The Extracellular segment spans residues 108-119 (HQCFTFEQFDTY). A helical transmembrane segment spans residues 120–139 (CLIAFIVIGIMAGLAQTIAF). The Cytoplasmic portion of the chain corresponds to 140–148 (SVGTTMEEN). Residues 149–171 (MGGYMSAGIGISGVFIFIINLLL) form a helical membrane-spanning segment. The Extracellular portion of the chain corresponds to 172-187 (DQIVPDQKKFNVNEAK). Residues 188–210 (LLYLFLICELCLVLAIIFSVCNL) form a helical membrane-spanning segment. Over 211–241 (ELSSSKTSKEEEYSDKEQGLSYLELLKDSYK) the chain is Cytoplasmic. Residues 242 to 261 (AILAMFLVNWLSLQLFPGVG) form a helical membrane-spanning segment. The Extracellular segment spans residues 262–273 (HKKWQESHNISD). A helical transmembrane segment spans residues 274-292 (YNVTLIVGMFQVFDFVSRY). At 293 to 311 (PPNLSHMKIFKWFTFSLNK) the chain is on the cytoplasmic side. Residues 312-331 (LLLLNFLRLLFIPWFVINAA) form a helical membrane-spanning segment. At 332–343 (CDLPIFTNIVQQ) the chain is on the extracellular side. A helical transmembrane segment spans residues 344–366 (CVCMAMLAFTNGWFNTVPFLVFV). Topologically, residues 367 to 380 (QELKKAKKKKDIET) are cytoplasmic. The chain crosses the membrane as a helical span at residues 381 to 403 (ISTFLVVAMFVGLFMGIWTTYIY). Residues 404 to 416 (DFFPIVIKRYVVP) are Extracellular-facing.

Belongs to the SLC29A/ENT transporter (TC 2.A.57) family.

The protein resides in the cell membrane. The catalysed reaction is inosine(in) = inosine(out). It catalyses the reaction adenosine(in) = adenosine(out). The enzyme catalyses hypoxanthine(out) = hypoxanthine(in). It carries out the reaction guanosine(in) = guanosine(out). The catalysed reaction is guanine(out) = guanine(in). It catalyses the reaction thymidine(in) = thymidine(out). The enzyme catalyses uridine(out) = uridine(in). It carries out the reaction uracil(in) = uracil(out). The catalysed reaction is thymine(out) = thymine(in). It catalyses the reaction adenine(out) = adenine(in). The enzyme catalyses cytosine(out) = cytosine(in). It carries out the reaction xanthine(out) = xanthine(in). In terms of biological role, nucleoside and nucleobase transporter with a broad substrate specificity. In Plasmodium vivax (strain Salvador I), this protein is Nucleoside transporter 1.